The chain runs to 543 residues: Pectate disaccharide-lyase (543 aa).

It belongs to the polysaccharide lyase 2 family. It depends on Cu cation as a cofactor. The cofactor is Mn(2+). Ni(2+) is required as a cofactor.

The protein localises to the cytoplasm. The enzyme catalyses [(1-&gt;4)-alpha-D-galacturonosyl](n) = 4-(4-deoxy-alpha-D-galact-4-enuronosyl)-D-galacturonate + [(1-&gt;4)-alpha-D-galacturonosyl](n-2). Its pathway is glycan metabolism; pectin degradation. Its function is as follows. Catalyzes the formation of unsaturated digalacturonates from polygalacturonate or short oligogalacturonates. This Dickeya dadantii (strain 3937) (Erwinia chrysanthemi (strain 3937)) protein is Pectate disaccharide-lyase (pelW).